Reading from the N-terminus, the 150-residue chain is MNEALDDIDRILVRELAADGRATLSELATRAGLSVSAVQSRVRRLESRGVVQGYSARINPEAVGHLLSAFVAITPLDPSQPDDAPARLEHIEEVESCYSVAGEESYVLLVRVASARALEDLLQRIRTTANVRTRSTIILNTFYSDRQHIP.

The region spanning 5–66 (LDDIDRILVR…RINPEAVGHL (62 aa)) is the HTH asnC-type domain. The H-T-H motif DNA-binding region spans 24–43 (LSELATRAGLSVSAVQSRVR). L-phenylalanine contacts are provided by V100, G102, and E104.

As to quaternary structure, homohexadecamer in the absence of any added ligand. Homooctamer. Tetramer of dimers. In the presence of phenylalanine, the hexadecamer dissociates into an octamer, which further dissociates partially into lower-order oligomers.

With respect to regulation, the DNA-binding activity of LrpA is modulated by interaction of LrpA with various effector molecules, including amino acids and vitamins. The DNA binding affinity is decreased by several amino acids, including phenylalanine, tyrosine, tryptophan, histidine, leucine and aspartate. Preferentially binds to aromatic amino acids. Besides amino acids, the binding affinity is also reduced by vitamins, including B1, B3, B6, VC, B7, B9, B12, VA and VK3. In terms of biological role, transcriptional regulator that probably plays an important role in M.tuberculosis persistence. Regulates the expression of several genes, including lat, rsmG, whiB2, lsr2 and Rv2011c. Acts by binding directly to the promoter region of the target genes. In Mycobacterium tuberculosis (strain ATCC 25618 / H37Rv), this protein is HTH-type transcriptional regulator LrpA.